A 668-amino-acid chain; its full sequence is Protein IQ-DOMAIN 14 (668 aa).

The segment at 1–11 (MVKKGSWFSAI) is calmodulin-binding. Disordered stretches follow at residues 16-54 (TPHS…FLPI) and 66-305 (GEAE…PRAV). Residues 18 to 31 (HSKEKLANEPERKS) are compositionally biased toward basic and acidic residues. The span at 32–43 (GKEKKKKGFGKL) shows a compositional bias: basic residues. A compositionally biased stretch (pro residues) spans 78–96 (PPTPDRPNPYSASPPPRPA). Low complexity-rich tracts occupy residues 97–120 (SPRV…SPRA) and 166–175 (PSSASANAPP). The segment covering 269-279 (PTTPKPPSPRS) has biased composition (pro residues). IQ domains are found at residues 321–350 (QHAS…LVRL) and 343–372 (ALKG…YMQQ). Disordered regions lie at residues 399–431 (AKWA…KTDA) and 476–561 (SPAP…SLTS). Positions 415–431 (VLTKEERDSRSQRKTDA) are enriched in basic and acidic residues. Positions 516-529 (DTSTPRSSRSTFHT) are enriched in polar residues.

The protein belongs to the IQD family. As to quaternary structure, binds to multiple calmodulin (CaM) in the presence of Ca(2+) and CaM-like proteins. In terms of tissue distribution, expressed in hypocotyls, cotyledons, leaves and petioles.

Its subcellular location is the cell membrane. The protein resides in the cytoplasm. It is found in the cytoskeleton. Functionally, may be involved in cooperative interactions with calmodulins or calmodulin-like proteins. Recruits calmodulin proteins to microtubules, thus being a potential scaffold in cellular signaling and trafficking. Regulates cell and organ shapes (prevents twisting) in aerial parts probably by regulating transverse microtubules (MT) arrays alignment. Regulates the formation of oval xylem secondary cell-wall deposition pits through microtubule-dependent lateral inhibition of Rho GTPase domains, thus confining the area of active ROP domains within the lattice of the cortical microtubules. May associate with nucleic acids and regulate gene expression at the transcriptional or post-transcriptional level. This is Protein IQ-DOMAIN 14 from Arabidopsis thaliana (Mouse-ear cress).